We begin with the raw amino-acid sequence, 286 residues long: 4-hydroxybenzoate octaprenyltransferase (286 aa).

Helical transmembrane passes span 20 to 40 (IGTL…AQGL), 43 to 63 (IKVL…GCII), 96 to 116 (LFTL…PLVV), 142 to 162 (FLGI…LGEV), 167 to 187 (WWLF…YAIV), 210 to 230 (QIIG…GLVA), 235 to 255 (IYGL…RLIF), and 266 to 286 (FLNN…DYMI).

It belongs to the UbiA prenyltransferase family. Mg(2+) serves as cofactor.

The protein localises to the cell inner membrane. It catalyses the reaction all-trans-octaprenyl diphosphate + 4-hydroxybenzoate = 4-hydroxy-3-(all-trans-octaprenyl)benzoate + diphosphate. It functions in the pathway cofactor biosynthesis; ubiquinone biosynthesis. Its function is as follows. Catalyzes the prenylation of para-hydroxybenzoate (PHB) with an all-trans polyprenyl group. Mediates the second step in the final reaction sequence of ubiquinone-8 (UQ-8) biosynthesis, which is the condensation of the polyisoprenoid side chain with PHB, generating the first membrane-bound Q intermediate 3-octaprenyl-4-hydroxybenzoate. The chain is 4-hydroxybenzoate octaprenyltransferase from Shewanella frigidimarina (strain NCIMB 400).